The sequence spans 245 residues: Uridylate kinase (245 aa).

12–15 (KISG) is an ATP binding site. Residue glycine 55 participates in UMP binding. The ATP site is built by glycine 56 and arginine 60. UMP contacts are provided by residues aspartate 76 and 137-144 (AGAPYLTT). Positions 164, 171, and 174 each coordinate ATP.

The protein belongs to the UMP kinase family. In terms of assembly, homohexamer.

The protein resides in the cytoplasm. It carries out the reaction UMP + ATP = UDP + ADP. It participates in pyrimidine metabolism; CTP biosynthesis via de novo pathway; UDP from UMP (UMPK route): step 1/1. Its activity is regulated as follows. Inhibited by UTP. Its function is as follows. Catalyzes the reversible phosphorylation of UMP to UDP. This is Uridylate kinase from Chlamydia trachomatis serovar D (strain ATCC VR-885 / DSM 19411 / UW-3/Cx).